The sequence spans 463 residues: Chromosomal replication initiator protein DnaA (463 aa).

The tract at residues 1-83 is domain I, interacts with DnaA modulators; the sequence is MSTNQIILTD…LQLFQHYNNT (83 aa). A domain II region spans residues 83–124; the sequence is TIKSVEIITKELPGTSKTVIELPTKTFADIGSSELNAENIFS. Residues 125–343 are domain III, AAA+ region; sequence TLDVRFTFDN…GALNKVIAHS (219 aa). Positions 171, 173, 174, and 175 each coordinate ATP. Positions 344-463 are domain IV, binds dsDNA; it reads NFTLKEITLE…INLLMKILQN (120 aa).

It belongs to the DnaA family. In terms of assembly, oligomerizes as a right-handed, spiral filament on DNA at oriC.

It localises to the cytoplasm. Its function is as follows. Plays an essential role in the initiation and regulation of chromosomal replication. ATP-DnaA binds to the origin of replication (oriC) to initiate formation of the DNA replication initiation complex once per cell cycle. Binds the DnaA box (a 9 base pair repeat at the origin) and separates the double-stranded (ds)DNA. Forms a right-handed helical filament on oriC DNA; dsDNA binds to the exterior of the filament while single-stranded (ss)DNA is stabiized in the filament's interior. The ATP-DnaA-oriC complex binds and stabilizes one strand of the AT-rich DNA unwinding element (DUE), permitting loading of DNA polymerase. After initiation quickly degrades to an ADP-DnaA complex that is not apt for DNA replication. Binds acidic phospholipids. The chain is Chromosomal replication initiator protein DnaA from Rickettsia canadensis (strain McKiel).